A 198-amino-acid chain; its full sequence is NAD(P)H dehydrogenase (quinone) (198 aa).

In terms of domain architecture, Flavodoxin-like spans 4–189 (ILVLYYSMYG…SIARYQGEYV (186 aa)). FMN-binding positions include 10-15 (SMYGHI) and 78-80 (TRF). Tyrosine 12 serves as a coordination point for NAD(+). Tryptophan 98 serves as a coordination point for substrate. FMN contacts are provided by residues 113-118 (STGTGG) and histidine 133.

This sequence belongs to the WrbA family. Requires FMN as cofactor.

It carries out the reaction a quinone + NADH + H(+) = a quinol + NAD(+). It catalyses the reaction a quinone + NADPH + H(+) = a quinol + NADP(+). The sequence is that of NAD(P)H dehydrogenase (quinone) from Salmonella paratyphi C (strain RKS4594).